A 115-amino-acid polypeptide reads, in one-letter code: Large ribosomal subunit protein bL20 (115 aa).

It belongs to the bacterial ribosomal protein bL20 family.

In terms of biological role, binds directly to 23S ribosomal RNA and is necessary for the in vitro assembly process of the 50S ribosomal subunit. It is not involved in the protein synthesizing functions of that subunit. The sequence is that of Large ribosomal subunit protein bL20 from Borrelia turicatae (strain 91E135).